A 217-amino-acid polypeptide reads, in one-letter code: Adenylate kinase (217 aa).

10–15 serves as a coordination point for ATP; it reads GAGKGT. Residues 30–59 form an NMP region; that stretch reads STGDMLREAVAKGTELGKKAKEYMDKGELV. Residues Thr31, Arg36, 57 to 59, 85 to 88, and Gln92 contribute to the AMP site; these read ELV and GFPR. Residues 126–163 are LID; that stretch reads YRRTCRNCGAVYHLIYAPPKEDNKCDKCGGELYQRDDD. Arg127 serves as a coordination point for ATP. Cys130 and Cys133 together coordinate Zn(2+). 136 to 137 lines the ATP pocket; it reads VY. Cys150 and Cys153 together coordinate Zn(2+). 2 residues coordinate AMP: Arg160 and Arg171. Lys199 contacts ATP.

This sequence belongs to the adenylate kinase family. As to quaternary structure, monomer.

It localises to the cytoplasm. It carries out the reaction AMP + ATP = 2 ADP. It functions in the pathway purine metabolism; AMP biosynthesis via salvage pathway; AMP from ADP: step 1/1. Its function is as follows. Catalyzes the reversible transfer of the terminal phosphate group between ATP and AMP. Plays an important role in cellular energy homeostasis and in adenine nucleotide metabolism. The polypeptide is Adenylate kinase (Archaeoglobus fulgidus (strain ATCC 49558 / DSM 4304 / JCM 9628 / NBRC 100126 / VC-16)).